Here is an 853-residue protein sequence, read N- to C-terminus: Penicillin-binding protein 1A (853 aa).

Residues 1–6 (MRIAKL) are Cytoplasmic-facing. Residues 7–27 (ILNTLLTLCILGLVAGGMLYF) traverse the membrane as a helical; Signal-anchor for type II membrane protein segment. The Periplasmic segment spans residues 28–853 (HLKSELQQPM…TPATQPQELF (826 aa)). The transglycosylase stretch occupies residues 37-205 (MQIYTADGKL…STMNPLYSLK (169 aa)). E75 serves as the catalytic Proton donor; for transglycosylase activity. The tract at residues 387-681 (QRANGEWQLG…RVISGELAFL (295 aa)) is transpeptidase. S441 (acyl-ester intermediate; for transpeptidase activity) is an active-site residue. The segment at 615–636 (NALKPTDDSTNGEELDQQPETV) is disordered.

This sequence in the N-terminal section; belongs to the glycosyltransferase 51 family. In the C-terminal section; belongs to the transpeptidase family.

It is found in the cell inner membrane. The enzyme catalyses [GlcNAc-(1-&gt;4)-Mur2Ac(oyl-L-Ala-gamma-D-Glu-L-Lys-D-Ala-D-Ala)](n)-di-trans,octa-cis-undecaprenyl diphosphate + beta-D-GlcNAc-(1-&gt;4)-Mur2Ac(oyl-L-Ala-gamma-D-Glu-L-Lys-D-Ala-D-Ala)-di-trans,octa-cis-undecaprenyl diphosphate = [GlcNAc-(1-&gt;4)-Mur2Ac(oyl-L-Ala-gamma-D-Glu-L-Lys-D-Ala-D-Ala)](n+1)-di-trans,octa-cis-undecaprenyl diphosphate + di-trans,octa-cis-undecaprenyl diphosphate + H(+). It catalyses the reaction Preferential cleavage: (Ac)2-L-Lys-D-Ala-|-D-Ala. Also transpeptidation of peptidyl-alanyl moieties that are N-acyl substituents of D-alanine.. Its pathway is cell wall biogenesis; peptidoglycan biosynthesis. Its function is as follows. Cell wall formation. Synthesis of cross-linked peptidoglycan from the lipid intermediates. The enzyme has a penicillin-insensitive transglycosylase N-terminal domain (formation of linear glycan strands) and a penicillin-sensitive transpeptidase C-terminal domain (cross-linking of the peptide subunits). The polypeptide is Penicillin-binding protein 1A (mrcA) (Haemophilus influenzae (strain ATCC 51907 / DSM 11121 / KW20 / Rd)).